The following is a 209-amino-acid chain: Uracil phosphoribosyltransferase (209 aa).

Residues arginine 79, arginine 104, and 131–139 each bind 5-phospho-alpha-D-ribose 1-diphosphate; that span reads DPMLATGNS. Residues isoleucine 194 and 199-201 each bind uracil; that span reads GDA. Position 200 (aspartate 200) interacts with 5-phospho-alpha-D-ribose 1-diphosphate.

This sequence belongs to the UPRTase family. The cofactor is Mg(2+).

The enzyme catalyses UMP + diphosphate = 5-phospho-alpha-D-ribose 1-diphosphate + uracil. It participates in pyrimidine metabolism; UMP biosynthesis via salvage pathway; UMP from uracil: step 1/1. Allosterically activated by GTP. Catalyzes the conversion of uracil and 5-phospho-alpha-D-ribose 1-diphosphate (PRPP) to UMP and diphosphate. In Sinorhizobium fredii (strain NBRC 101917 / NGR234), this protein is Uracil phosphoribosyltransferase.